The following is a 509-amino-acid chain: 3-ketoacyl-CoA synthase 11 (509 aa).

The next 2 helical transmembrane spans lie at 36–56 (LITH…AAQI) and 75–95 (LISV…YFMT). Residues 92–381 (YFMTRPRPVY…FFATLVGRKL (290 aa)) form the FAE domain. Residues Cys236, His315, His399, His403, and Asn436 contribute to the active site.

It belongs to the thiolase-like superfamily. Chalcone/stilbene synthases family. As to expression, only expressed in guard cells. Expressed in siliques, flowers, leaves, stems, roots and seedlings.

It is found in the membrane. The enzyme catalyses a very-long-chain acyl-CoA + malonyl-CoA + H(+) = a very-long-chain 3-oxoacyl-CoA + CO2 + CoA. Its pathway is lipid metabolism; fatty acid biosynthesis. Functionally, active on both saturated and mono-unsaturated acyl chains C16 to C20. The sequence is that of 3-ketoacyl-CoA synthase 11 from Arabidopsis thaliana (Mouse-ear cress).